The sequence spans 103 residues: PTS system oligo-beta-mannoside-specific EIIB component (103 aa).

Residues 1–103 (MKKILLACSS…EQALSLMVNQ (103 aa)) enclose the PTS EIIB type-3 domain. The active-site Phosphocysteine intermediate is the cysteine 8. The residue at position 8 (cysteine 8) is a Phosphocysteine; by EIIA.

The protein resides in the cytoplasm. The enzyme catalyses D-cellobiose(out) + N(pros)-phospho-L-histidyl-[protein] = 6-phospho-beta-D-glucosyl-(1-&gt;4)-D-glucose(in) + L-histidyl-[protein]. The phosphoenolpyruvate-dependent sugar phosphotransferase system (sugar PTS), a major carbohydrate active transport system, catalyzes the phosphorylation of incoming sugar substrates concomitantly with their translocation across the cell membrane. The enzyme II GmuABC PTS system is involved in the transport of oligo-glucomannans such as cellobiose or mannobiose. The protein is PTS system oligo-beta-mannoside-specific EIIB component of Bacillus subtilis (strain 168).